Reading from the N-terminus, the 463-residue chain is Probable mannan endo-1,4-beta-mannosidase F (463 aa).

Residues 1 to 18 (MRSLSSIALLSVVGAASA) form the signal peptide. Residues 19–54 (QAGPWAQCGGKSFSGSSECASGWKCQELNEWFSQCV) form the CBM1 domain. Positions 57-78 (AESTTPTVSSTPTPTDAPSVSI) are disordered. A compositionally biased stretch (low complexity) spans 59 to 77 (STTPTVSSTPTPTDAPSVS). The ser-rich linker stretch occupies residues 75 to 118 (SVSITASATTGINKSISVSSASKSTPLPSSSSASPSPRPTGSGS). A glycan (N-linked (GlcNAc...) asparagine) is linked at N87. Positions 93–118 (SSASKSTPLPSSSSASPSPRPTGSGS) are enriched in low complexity. Residues 93–121 (SSASKSTPLPSSSSASPSPRPTGSGSFAK) are disordered. Residues 119-463 (FAKADGLQFS…MDHMENVNKN (345 aa)) form a catalytic region. Residues W171 and N285 each contribute to the substrate site. E286 acts as the Proton donor in catalysis. Y361 contacts substrate. The Nucleophile role is filled by E395. W424 is a substrate binding site.

This sequence belongs to the glycosyl hydrolase 5 (cellulase A) family.

The protein localises to the secreted. The enzyme catalyses Random hydrolysis of (1-&gt;4)-beta-D-mannosidic linkages in mannans, galactomannans and glucomannans.. In terms of biological role, endo-1,4-mannanase, a crucial enzyme for depolymerization of seed galactomannans and wood galactoglucomannans. The protein is Probable mannan endo-1,4-beta-mannosidase F (manF) of Aspergillus flavus (strain ATCC 200026 / FGSC A1120 / IAM 13836 / NRRL 3357 / JCM 12722 / SRRC 167).